Reading from the N-terminus, the 493-residue chain is Glutamyl-tRNA(Gln) amidotransferase subunit A (493 aa).

Catalysis depends on charge relay system residues K79 and S159. The Acyl-ester intermediate role is filled by S183.

It belongs to the amidase family. GatA subfamily. As to quaternary structure, heterotrimer of A, B and C subunits.

It catalyses the reaction L-glutamyl-tRNA(Gln) + L-glutamine + ATP + H2O = L-glutaminyl-tRNA(Gln) + L-glutamate + ADP + phosphate + H(+). Allows the formation of correctly charged Gln-tRNA(Gln) through the transamidation of misacylated Glu-tRNA(Gln) in organisms which lack glutaminyl-tRNA synthetase. The reaction takes place in the presence of glutamine and ATP through an activated gamma-phospho-Glu-tRNA(Gln). This Sinorhizobium medicae (strain WSM419) (Ensifer medicae) protein is Glutamyl-tRNA(Gln) amidotransferase subunit A.